Consider the following 833-residue polypeptide: Leucine--tRNA ligase (833 aa).

Positions 41 to 52 (PYPSGAGLHVGH) match the 'HIGH' region motif. The short motif at 610 to 614 (KMSKS) is the 'KMSKS' region element. Residue Lys-613 participates in ATP binding.

Belongs to the class-I aminoacyl-tRNA synthetase family.

It localises to the cytoplasm. The enzyme catalyses tRNA(Leu) + L-leucine + ATP = L-leucyl-tRNA(Leu) + AMP + diphosphate. The chain is Leucine--tRNA ligase from Streptococcus pneumoniae (strain 70585).